A 233-amino-acid polypeptide reads, in one-letter code: Large ribosomal subunit protein uL1 (233 aa).

Belongs to the universal ribosomal protein uL1 family. Part of the 50S ribosomal subunit.

Its function is as follows. Binds directly to 23S rRNA. The L1 stalk is quite mobile in the ribosome, and is involved in E site tRNA release. Protein L1 is also a translational repressor protein, it controls the translation of the L11 operon by binding to its mRNA. In Nautilia profundicola (strain ATCC BAA-1463 / DSM 18972 / AmH), this protein is Large ribosomal subunit protein uL1.